Here is a 170-residue protein sequence, read N- to C-terminus: Nucleoside-triphosphatase THEP1 (170 aa).

Residues G7–T14 and I98–G105 each bind ATP.

Belongs to the THEP1 NTPase family.

The catalysed reaction is a ribonucleoside 5'-triphosphate + H2O = a ribonucleoside 5'-diphosphate + phosphate + H(+). Its function is as follows. Has nucleotide phosphatase activity towards ATP, GTP, CTP, TTP and UTP. May hydrolyze nucleoside diphosphates with lower efficiency. The sequence is that of Nucleoside-triphosphatase THEP1 from Methanocaldococcus jannaschii (strain ATCC 43067 / DSM 2661 / JAL-1 / JCM 10045 / NBRC 100440) (Methanococcus jannaschii).